We begin with the raw amino-acid sequence, 385 residues long: Leucine aminopeptidase 1 (385 aa).

An N-terminal signal peptide occupies residues 1–19; sequence MKFPNLLSLGVAASTTVLA. Residues 20–87 constitute a propeptide that is removed on maturation; sequence AVPNQKPIGD…FPRTFAQTTV (68 aa). Asn177 is a glycosylation site (N-linked (GlcNAc...) asparagine). The Zn(2+) site is built by His185, Asp204, Glu243, and Asp270. A disulfide bond links Cys319 and Cys323. His352 lines the Zn(2+) pocket.

It belongs to the peptidase M28 family. M28E subfamily. In terms of assembly, monomer. It depends on Zn(2+) as a cofactor.

The protein localises to the secreted. Its function is as follows. Extracellular aminopeptidase that allows assimilation of proteinaceous substrates. This chain is Leucine aminopeptidase 1 (LAP1), found in Ajellomyces capsulatus (strain H88) (Darling's disease fungus).